Consider the following 235-residue polypeptide: Ribonuclease 3 (235 aa).

Positions 11 to 137 (RAWCAEALGY…VVGALYLDGG (127 aa)) constitute an RNase III domain. Glu51 lines the Mg(2+) pocket. Asp55 is an active-site residue. Asp123 and Glu126 together coordinate Mg(2+). Residue Glu126 is part of the active site. The DRBM domain occupies 164-233 (DYKTQLQEQL…ARQALMPEHH (70 aa)).

The protein belongs to the ribonuclease III family. Homodimer. The cofactor is Mg(2+).

Its subcellular location is the cytoplasm. It carries out the reaction Endonucleolytic cleavage to 5'-phosphomonoester.. Digests double-stranded RNA. Involved in the processing of primary rRNA transcript to yield the immediate precursors to the large and small rRNAs (23S and 16S). Processes some mRNAs, and tRNAs when they are encoded in the rRNA operon. Processes pre-crRNA and tracrRNA of type II CRISPR loci if present in the organism. The polypeptide is Ribonuclease 3 (Symbiobacterium thermophilum (strain DSM 24528 / JCM 14929 / IAM 14863 / T)).